Here is a 57-residue protein sequence, read N- to C-terminus: Small ribosomal subunit protein bS21B (57 aa).

The segment at 37–57 is disordered; the sequence is RYEKPSARRKRKAEAARKRRR. Positions 43 to 57 are enriched in basic residues; sequence ARRKRKAEAARKRRR.

Belongs to the bacterial ribosomal protein bS21 family.

This is Small ribosomal subunit protein bS21B from Gloeobacter violaceus (strain ATCC 29082 / PCC 7421).